We begin with the raw amino-acid sequence, 114 residues long: Peroxisomal biogenesis factor 39 (114 aa).

2 disordered regions span residues 1-26 and 53-114; these read MSWWQDMDQRGGVSSPSGALASAEPA and ITAT…PRVS. Ser102 is subject to Phosphoserine.

Its subcellular location is the peroxisome. Functionally, may be a peroxin involved in the PTS2-mediated protein import pathway. This chain is Peroxisomal biogenesis factor 39 (Pex39), found in Mus musculus (Mouse).